The chain runs to 275 residues: Polar tube protein 2 (275 aa).

Residues 1 to 18 form the signal peptide; it reads MLLLLSAVAFVSATAVQS. 2 N-linked (GlcNAc...) asparagine glycosylation sites follow: Asn132 and Asn248. The interval 233–275 is disordered; the sequence is IQKKEIKESPKEGDRNTTQEYDGEGSAEDAEGQQPSADGEGLE. The span at 234 to 249 shows a compositional bias: basic and acidic residues; it reads QKKEIKESPKEGDRNT. Acidic residues predominate over residues 253–263; the sequence is YDGEGSAEDAE.

The protein localises to the spore polar tube. In terms of biological role, involved in formation of a polar tube through which the infectious agent is passed on to the host cell. In Encephalitozoon intestinalis (Microsporidian parasite), this protein is Polar tube protein 2 (PTP2).